A 293-amino-acid polypeptide reads, in one-letter code: tRNA pseudouridine synthase B (293 aa).

The active-site Nucleophile is the Asp-38.

Belongs to the pseudouridine synthase TruB family. Type 1 subfamily.

It carries out the reaction uridine(55) in tRNA = pseudouridine(55) in tRNA. Responsible for synthesis of pseudouridine from uracil-55 in the psi GC loop of transfer RNAs. The polypeptide is tRNA pseudouridine synthase B (Microcystis aeruginosa (strain NIES-843 / IAM M-2473)).